A 419-amino-acid polypeptide reads, in one-letter code: Peptide chain release factor subunit 1 (419 aa).

The protein belongs to the eukaryotic release factor 1 family. In terms of assembly, heterodimer of two subunits, one of which binds GTP.

The protein resides in the cytoplasm. In terms of biological role, directs the termination of nascent peptide synthesis (translation) in response to the termination codons UAA, UAG and UGA. This is Peptide chain release factor subunit 1 from Methanococcus maripaludis (strain DSM 14266 / JCM 13030 / NBRC 101832 / S2 / LL).